The primary structure comprises 2395 residues: Centrosomal protein of 295 kDa (2395 aa).

A necessary for centriole targeting and microtubule association region spans residues 1-540 (MKRKVMNGKL…KQADHLEVRP (540 aa)). Ser13 bears the Phosphoserine mark. 5 coiled-coil regions span residues 53 to 84 (QRRNQQVSHLAEELRAEWEEAQSQKIQNLEKL), 114 to 148 (AERKTKAEARHKEALKAQKKQKEMLMKQKTRHIKA), 209 to 277 (DAHL…KRQT), 488 to 538 (ARHK…HLEV), and 567 to 592 (QQNRLHKQTVETARKRLLEYQTVLKE). Disordered stretches follow at residues 602-643 (LIPD…PVQP), 660-681 (GHIPQRQGETARAKQSVESQER), and 735-764 (SDSQQISSEDSENISSKPTEPSSSLPLMPE). Ser634 carries the phosphoserine modification. Residues 735-750 (SDSQQISSEDSENISS) show a composition bias toward low complexity. The stretch at 817-848 (GQLELQKKVLQERQEAQEKLLSCTQKELEEQT) forms a coiled coil. 3 disordered regions span residues 864–893 (SLPSASAESGNIQTSSTKSDATVSSDSMDN), 966–986 (ADTQSRKIQKPPLPTNKKGLL), and 1212–1272 (VDPE…SKVT). Over residues 1219 to 1250 (FQFSPQTQENRSSQQTGFSSFTPSLRQPSCVS) the composition is skewed to polar residues. Positions 1444–1488 (HDDLQALQQQLDVHREAIRSCQDIQEELLLQRLNKLEQRVSSKQI) form a coiled coil. The residue at position 1565 (Ser1565) is a Phosphoserine. Residues 1677–1692 (PWGDSSQGSSSGDQPG) show a composition bias toward low complexity. Disordered regions lie at residues 1677 to 1715 (PWGDSSQGSSSGDQPGAAAVHAEHSGESLGKELSGRASK), 1819 to 1845 (SEEEEEEEACTNLSPLMKPDDEVETQE), 1875 to 1899 (ESFSEQTEHQEQESSSKEEETGSLS), 1989 to 2013 (DLSSPGTSQEDRDFYQQNSESSSEK), and 2354 to 2395 (NKTP…SQCI). Basic and acidic residues predominate over residues 1697–1710 (HAEHSGESLGKELS). Basic and acidic residues predominate over residues 1880–1894 (QTEHQEQESSSKEEE). The segment at 2329-2395 (SLGEAFMKRK…TAKRNRSQCI (67 aa)) is ALMS motif. The span at 2376–2388 (HLKEAVSGDETAK) shows a compositional bias: basic and acidic residues.

In terms of assembly, interacts (via ALMS motif) with microtubules; this interaction is direct.

The protein localises to the cytoplasm. Its subcellular location is the cytoskeleton. The protein resides in the microtubule organizing center. It localises to the centrosome. It is found in the centriole. The protein localises to the spindle. Functionally, centriole-enriched microtubule-binding protein involved in centriole biogenesis. Essential for the generation of the distal portion of new-born centrioles in a CPAP- and CEP120-mediated elongation dependent manner during the cell cycle S/G2 phase after formation of the initiating cartwheel structure. Required for the recruitment of centriolar proteins, such as POC1B, POC5 and CEP135, into the distal portion of centrioles. Also required for centriole-to-centrosome conversion during mitotic progression, but is dispensable for cartwheel removal or centriole disengagement. Binds to and stabilizes centriolar microtubule. May be involved in ciliogenesis. This Rattus norvegicus (Rat) protein is Centrosomal protein of 295 kDa.